A 196-amino-acid chain; its full sequence is Imidazoleglycerol-phosphate dehydratase (196 aa).

This sequence belongs to the imidazoleglycerol-phosphate dehydratase family.

The protein resides in the cytoplasm. The enzyme catalyses D-erythro-1-(imidazol-4-yl)glycerol 3-phosphate = 3-(imidazol-4-yl)-2-oxopropyl phosphate + H2O. The protein operates within amino-acid biosynthesis; L-histidine biosynthesis; L-histidine from 5-phospho-alpha-D-ribose 1-diphosphate: step 6/9. The polypeptide is Imidazoleglycerol-phosphate dehydratase (Halobacterium salinarum (strain ATCC 700922 / JCM 11081 / NRC-1) (Halobacterium halobium)).